The chain runs to 132 residues: ATP synthase epsilon chain (132 aa).

The protein belongs to the ATPase epsilon chain family. F-type ATPases have 2 components, CF(1) - the catalytic core - and CF(0) - the membrane proton channel. CF(1) has five subunits: alpha(3), beta(3), gamma(1), delta(1), epsilon(1). CF(0) has four main subunits: a, b, b' and c.

Its subcellular location is the cellular chromatophore membrane. Its function is as follows. Produces ATP from ADP in the presence of a proton gradient across the membrane. This is ATP synthase epsilon chain (atpC) from Rhodobacter capsulatus (Rhodopseudomonas capsulata).